A 200-amino-acid polypeptide reads, in one-letter code: Late embryogenesis abundant protein 19 (200 aa).

2 disordered regions span residues 1–158 (MASH…KSTV) and 172–200 (TEDK…ARDH). Composition is skewed to basic and acidic residues over residues 13–23 (GETKAHTEEKA), 30–42 (SKDK…DRAS), 53–81 (QDTK…KDKT), 88–97 (ARDKAAESKD), and 105–114 (EKTEQAKQKA). Positions 52–81 (GQDTKEATKEKAQAAKERASETAQAAKDKT) form a coiled coil. A compositionally biased stretch (low complexity) spans 115 to 130 (AETAGAAKQKTAETAQ). Residues 145-156 (SVLQQASEQVKS) show a composition bias toward polar residues. Over residues 172 to 183 (TEDKAGTDDGAN) the composition is skewed to basic and acidic residues. Over residues 186–200 (TSATAAATETTARDH) the composition is skewed to low complexity.

This sequence belongs to the LEA type 4 family. Expressed in the shoot apex and leaves.

Involved in response to drought stress. The protein is Late embryogenesis abundant protein 19 of Oryza sativa subsp. indica (Rice).